A 100-amino-acid chain; its full sequence is Replication restart protein PriB (100 aa).

The region spanning 4–99 (TNLVSLAALI…LRIQNIKEYK (96 aa)) is the SSB domain.

This sequence belongs to the PriB family. Homodimer. Component of the replication restart primosome. Primosome assembly occurs via a 'hand-off' mechanism. PriA binds to replication forks, subsequently PriB then DnaT bind; DnaT then displaces ssDNA to generate the helicase loading substrate. Interacts with PriA with high affinity, independent of DNA presence.

With respect to regulation, priA:PriB complex-catalyzed duplex DNA winding is inhibited by CGS 15943 (CHEBI:131351); PriA is the drug target. Stimulates the DNA unwinding activity of PriA helicase, which does not seem to require single-stranded (ss)DNA-binding by PriB. Activates DNA-dependent ATP hydrolysis catalyzed by PriA. Weakly binds ssDNA. Weakly binds double-stranded (ds)DNA, a partial duplex DNA with a 3' ssDNA overhang, and a forked DNA structure with fully duplex leading and lagging strand arms in vitro. Functionally, involved in the restart of stalled replication forks, which reloads the replicative helicase on sites other than the origin of replication; the PriA-PriB pathway is the major replication restart pathway. During primosome assembly it facilitates complex formation between PriA and DnaT on DNA; stabilizes PriA on DNA. Stimulates the DNA unwinding activity of PriA helicase. This Neisseria gonorrhoeae (strain ATCC 700825 / FA 1090) protein is Replication restart protein PriB.